Consider the following 607-residue polypeptide: DNA primase (607 aa).

The CHC2-type zinc-finger motif lies at 39–63; that stretch reads CPFHDDKNPSMSISSSKNIFKCWAC. Positions 267 to 350 constitute a Toprim domain; that stretch reads NQLFIVEGYF…IVEIVQWEHN (84 aa). Residues glutamate 273, aspartate 319, and aspartate 321 each contribute to the Mg(2+) site.

This sequence belongs to the DnaG primase family. As to quaternary structure, monomer. Interacts with DnaB. Zn(2+) serves as cofactor. Mg(2+) is required as a cofactor.

It carries out the reaction ssDNA + n NTP = ssDNA/pppN(pN)n-1 hybrid + (n-1) diphosphate.. In terms of biological role, RNA polymerase that catalyzes the synthesis of short RNA molecules used as primers for DNA polymerase during DNA replication. This is DNA primase from Mycoplasma genitalium (strain ATCC 33530 / DSM 19775 / NCTC 10195 / G37) (Mycoplasmoides genitalium).